Consider the following 231-residue polypeptide: Octanoyltransferase (231 aa).

Residues 49–227 form the BPL/LPL catalytic domain; it reads PHLPEAVWLL…ALAARFHLAW (179 aa). Residues 91–98, 158–160, and 171–173 each bind substrate; these read RGGEVTHH, AIG, and GLA. Cysteine 189 acts as the Acyl-thioester intermediate in catalysis.

The protein belongs to the LipB family.

It localises to the cytoplasm. The enzyme catalyses octanoyl-[ACP] + L-lysyl-[protein] = N(6)-octanoyl-L-lysyl-[protein] + holo-[ACP] + H(+). It participates in protein modification; protein lipoylation via endogenous pathway; protein N(6)-(lipoyl)lysine from octanoyl-[acyl-carrier-protein]: step 1/2. Functionally, catalyzes the transfer of endogenously produced octanoic acid from octanoyl-acyl-carrier-protein onto the lipoyl domains of lipoate-dependent enzymes. Lipoyl-ACP can also act as a substrate although octanoyl-ACP is likely to be the physiological substrate. The protein is Octanoyltransferase of Parasynechococcus marenigrum (strain WH8102).